The chain runs to 246 residues: Probable transcriptional regulatory protein AHA_1522 (246 aa).

The protein belongs to the TACO1 family.

The protein localises to the cytoplasm. The chain is Probable transcriptional regulatory protein AHA_1522 from Aeromonas hydrophila subsp. hydrophila (strain ATCC 7966 / DSM 30187 / BCRC 13018 / CCUG 14551 / JCM 1027 / KCTC 2358 / NCIMB 9240 / NCTC 8049).